Consider the following 702-residue polypeptide: Cytolytic toxin-alpha (702 aa).

Residues 2-265 (SSDIIMAGLG…KADLLVRDIS (264 aa)) form a structural MACPF/CDC pore-forming domain region. Residues N93, N100, N201, N287, and N311 are each glycosylated (N-linked (GlcNAc...) asparagine). The structural FAT domain stretch occupies residues 266 to 385 (QGLVRKVHSI…DIIEETKHKA (120 aa)). The thioredoxin (THX) domain stretch occupies residues 386–513 (VLSQSQMVKD…PIISAVEKIV (128 aa)). Residues 505-702 (IISAVEKIVD…RPYHGTVRLL (198 aa)) enclose the B30.2/SPRY domain. N530 carries N-linked (GlcNAc...) asparagine glycosylation.

Belongs to the SNTX/VTX toxin family. As to quaternary structure, heterodimer of alpha and beta subunits; non-covalently linked. Also associates into tetramers or even higher aggregates. Intrachain disulfide bonds may be present in the heterodimer. Expressed by the venom gland.

Its subcellular location is the secreted. Functionally, this heterodimer induces potent hemolytic activities (when tested on rabbit erythrocytes, EC(50)=25-56 ng/mL) due to its ability to form pores in the cell membrane. The pore may be composed of 10 alpha/beta heterodimers. The toxin shows cardiovascular effects that include a vasorelaxant action that may involve the L-arginine-nitric oxid synthase pathway. In addition, it displays edema-inducing activities, increases vascular permeability. It also shows myotoxic activities and interferes irreversibly with neuromuscular function. It also induces irreversible platelet aggregation in rabbit or rat (but not in human or mouse) whole blood. In addition, it has been observed to increase spontaneous quantal acetylcholine release from isolated frog cutaneous pectoris motor endings. The sequence is that of Cytolytic toxin-alpha from Scorpaena plumieri (Spotted scorpionfish).